We begin with the raw amino-acid sequence, 275 residues long: Notch homolog 2 N-terminal-like protein B (275 aa).

A signal peptide spans 1-25; it reads MPALRPALLWALLALWLCCATPAHA. 4 consecutive EGF-like domains span residues 26–63, 64–102, 105–143, and 144–180; these read LQCR…EYCQ, HRDP…EDCQ, TSHP…KECQ, and WTDA…QKCE. 17 cysteine pairs are disulfide-bonded: Cys28–Cys41, Cys35–Cys51, Cys53–Cys62, Cys68–Cys79, Cys73–Cys90, Cys92–Cys101, Cys109–Cys121, Cys115–Cys131, Cys133–Cys142, Cys148–Cys159, Cys153–Cys168, Cys170–Cys179, Cys186–Cys198, Cys192–Cys207, Cys209–Cys218, Cys225–Cys236, and Cys230–Cys246. Asn46 carries an N-linked (GlcNAc...) asparagine glycan. An N-linked (GlcNAc...) asparagine glycan is attached at Asn155. The 38-residue stretch at 182–219 folds into the EGF-like 5; calcium-binding domain; sequence DVNECDIPGHCQHGGICLNLPGSYQCQCLQGFTGQYCD. One can recognise an EGF-like 6 domain in the interval 221 to 258; it reads LYVPCAPSPCVNGGTCRQTGDFTFECNCLPETVRRGTE.

This sequence belongs to the NOTCH family. Interacts with NOTCH2. Interacts with DLL1; the interaction is direct. In terms of tissue distribution, expressed in radial glia neural stem cells during cortical development.

Its subcellular location is the secreted. Human-specific protein that promotes neural progenitor proliferation and evolutionary expansion of the brain neocortex by regulating the Notch signaling pathway. Able to promote neural progenitor self-renewal, possibly by down-regulating neuronal differentiation genes, thereby delaying the differentiation of neuronal progenitors and leading to an overall final increase in neuronal production. Acts by enhancing the Notch signaling pathway via two different mechanisms that probably work in parallel to reach the same effect. Enhances Notch signaling pathway in a non-cell-autonomous manner via direct interaction with NOTCH2. Also promotes Notch signaling pathway in a cell-autonomous manner through inhibition of cis DLL1-NOTCH2 interactions, which promotes neuronal differentiation. This is Notch homolog 2 N-terminal-like protein B from Homo sapiens (Human).